The primary structure comprises 237 residues: NAD(P)H-hydrate epimerase (237 aa).

The region spanning Ala-11 to Val-223 is the YjeF N-terminal domain. Asn-61–Asp-65 contacts (6S)-NADPHX. 2 residues coordinate K(+): Asn-62 and Asp-123. (6S)-NADPHX is bound by residues Gly-127–Pro-133 and Asp-156. Ser-159 is a binding site for K(+).

The protein belongs to the NnrE/AIBP family. The cofactor is K(+).

The protein resides in the cytoplasm. It localises to the mitochondrion. It catalyses the reaction (6R)-NADHX = (6S)-NADHX. It carries out the reaction (6R)-NADPHX = (6S)-NADPHX. In terms of biological role, catalyzes the epimerization of the S- and R-forms of NAD(P)HX, a damaged form of NAD(P)H that is a result of enzymatic or heat-dependent hydration. This is a prerequisite for the S-specific NAD(P)H-hydrate dehydratase to allow the repair of both epimers of NAD(P)HX. The sequence is that of NAD(P)H-hydrate epimerase from Ajellomyces capsulatus (strain G186AR / H82 / ATCC MYA-2454 / RMSCC 2432) (Darling's disease fungus).